A 203-amino-acid polypeptide reads, in one-letter code: GTP-binding protein ypt1 (203 aa).

GTP-binding positions include 15–23 (GDSGVGKSC), 33–40 (YTESYIST), 63–67 (DTAGQ), 121–124 (NKSD), and 151–153 (SAK). Residues 37-45 (YISTIGVDF) carry the Effector region motif. The disordered stretch occupies residues 180–203 (NNTKASVNVSPGHGVSNNSSGGCC). Residues Cys202 and Cys203 are each lipidated (S-geranylgeranyl cysteine).

Belongs to the small GTPase superfamily. Rab family.

Its subcellular location is the endoplasmic reticulum membrane. The protein resides in the golgi apparatus membrane. The protein localises to the cytoplasm. It localises to the preautophagosomal structure membrane. Its activity is regulated as follows. Rab activation is generally mediated by a guanine exchange factor (GEF), while inactivation through hydrolysis of bound GTP is catalyzed by a GTPase activating protein (GAP). In terms of biological role, the small GTPases Rab are key regulators of intracellular membrane trafficking, from the formation of transport vesicles to their fusion with membranes. Rabs cycle between an inactive GDP-bound form and an active GTP-bound form that is able to recruit to membranes different set of downstream effectors directly responsible for vesicle formation, movement, tethering and fusion. Ypt-1 regulates the trafficking of secretory vesicles from the endoplasmic reticulum (ER) to the Golgi. Plays a role in the initial events of the autophagic vacuole development which take place at specialized regions of the endoplasmic reticulum. Also involved in the recycling of membrane proteins. This is GTP-binding protein ypt1 (ypt-1) from Neurospora crassa (strain ATCC 24698 / 74-OR23-1A / CBS 708.71 / DSM 1257 / FGSC 987).